The chain runs to 69 residues: Conotoxin AbVIF (69 aa).

Positions 1-17 (VLIIAVLFLTACQLTTA) are cleaved as a signal peptide. A propeptide spanning residues 18-40 (ETSSRGKQKHRALRSTDKNSRMS) is cleaved from the precursor. The disordered stretch occupies residues 20-41 (SSRGKQKHRALRSTDKNSRMSK). 3 cysteine pairs are disulfide-bonded: Cys43–Cys57, Cys50–Cys61, and Cys56–Cys68.

This sequence belongs to the conotoxin O1 superfamily. Expressed by the venom duct.

The protein localises to the secreted. The sequence is that of Conotoxin AbVIF from Conus abbreviatus (Abbreviated cone).